A 282-amino-acid polypeptide reads, in one-letter code: Bifunctional protein FolD 1 (282 aa).

Residues 167–169 and S192 each bind NADP(+); that span reads GRS.

The protein belongs to the tetrahydrofolate dehydrogenase/cyclohydrolase family. As to quaternary structure, homodimer.

The catalysed reaction is (6R)-5,10-methylene-5,6,7,8-tetrahydrofolate + NADP(+) = (6R)-5,10-methenyltetrahydrofolate + NADPH. It carries out the reaction (6R)-5,10-methenyltetrahydrofolate + H2O = (6R)-10-formyltetrahydrofolate + H(+). It participates in one-carbon metabolism; tetrahydrofolate interconversion. Functionally, catalyzes the oxidation of 5,10-methylenetetrahydrofolate to 5,10-methenyltetrahydrofolate and then the hydrolysis of 5,10-methenyltetrahydrofolate to 10-formyltetrahydrofolate. The polypeptide is Bifunctional protein FolD 1 (Colwellia psychrerythraea (strain 34H / ATCC BAA-681) (Vibrio psychroerythus)).